Consider the following 519-residue polypeptide: 2-isopropylmalate synthase (519 aa).

One can recognise a Pyruvate carboxyltransferase domain in the interval 5-267 (VKIFDTTLRD…NTNIRSHEIS (263 aa)). The Mn(2+) site is built by aspartate 14, histidine 202, histidine 204, and asparagine 238. The regulatory domain stretch occupies residues 392–519 (KLLYLQASSG…KKQQTQTAGV (128 aa)).

Belongs to the alpha-IPM synthase/homocitrate synthase family. LeuA type 1 subfamily. Homodimer. It depends on Mn(2+) as a cofactor.

It localises to the cytoplasm. The catalysed reaction is 3-methyl-2-oxobutanoate + acetyl-CoA + H2O = (2S)-2-isopropylmalate + CoA + H(+). The protein operates within amino-acid biosynthesis; L-leucine biosynthesis; L-leucine from 3-methyl-2-oxobutanoate: step 1/4. Functionally, catalyzes the condensation of the acetyl group of acetyl-CoA with 3-methyl-2-oxobutanoate (2-ketoisovalerate) to form 3-carboxy-3-hydroxy-4-methylpentanoate (2-isopropylmalate). This is 2-isopropylmalate synthase from Pseudoalteromonas atlantica (strain T6c / ATCC BAA-1087).